The primary structure comprises 321 residues: Lipoyl synthase (321 aa).

Positions 68, 73, 79, 94, 98, 101, and 308 each coordinate [4Fe-4S] cluster. The Radical SAM core domain occupies 80-297 (FNHGTATFMI…KEIALELGFT (218 aa)).

The protein belongs to the radical SAM superfamily. Lipoyl synthase family. [4Fe-4S] cluster is required as a cofactor.

It localises to the cytoplasm. The enzyme catalyses [[Fe-S] cluster scaffold protein carrying a second [4Fe-4S](2+) cluster] + N(6)-octanoyl-L-lysyl-[protein] + 2 oxidized [2Fe-2S]-[ferredoxin] + 2 S-adenosyl-L-methionine + 4 H(+) = [[Fe-S] cluster scaffold protein] + N(6)-[(R)-dihydrolipoyl]-L-lysyl-[protein] + 4 Fe(3+) + 2 hydrogen sulfide + 2 5'-deoxyadenosine + 2 L-methionine + 2 reduced [2Fe-2S]-[ferredoxin]. Its pathway is protein modification; protein lipoylation via endogenous pathway; protein N(6)-(lipoyl)lysine from octanoyl-[acyl-carrier-protein]: step 2/2. Its function is as follows. Catalyzes the radical-mediated insertion of two sulfur atoms into the C-6 and C-8 positions of the octanoyl moiety bound to the lipoyl domains of lipoate-dependent enzymes, thereby converting the octanoylated domains into lipoylated derivatives. The protein is Lipoyl synthase of Vibrio cholerae serotype O1 (strain ATCC 39541 / Classical Ogawa 395 / O395).